The following is a 230-amino-acid chain: 7-cyano-7-deazaguanine synthase (230 aa).

10–20 provides a ligand contact to ATP; it reads LSGGLDSATTA. Zn(2+)-binding residues include Cys191, Cys199, Cys202, and Cys205.

The protein belongs to the QueC family. It depends on Zn(2+) as a cofactor.

The catalysed reaction is 7-carboxy-7-deazaguanine + NH4(+) + ATP = 7-cyano-7-deazaguanine + ADP + phosphate + H2O + H(+). It participates in purine metabolism; 7-cyano-7-deazaguanine biosynthesis. Functionally, catalyzes the ATP-dependent conversion of 7-carboxy-7-deazaguanine (CDG) to 7-cyano-7-deazaguanine (preQ(0)). This chain is 7-cyano-7-deazaguanine synthase, found in Gloeothece citriformis (strain PCC 7424) (Cyanothece sp. (strain PCC 7424)).